The primary structure comprises 100 residues: uncharacterized protein (100 aa).

The protein resides in the mitochondrion. This is an uncharacterized protein from Arabidopsis thaliana (Mouse-ear cress).